The primary structure comprises 488 residues: Prostaglandin E2 receptor EP4 subtype (488 aa).

Over 1–19 (MSTPVANASASSMPELLNN) the chain is Extracellular. Residue N7 is glycosylated (N-linked (GlcNAc...) asparagine). The helical transmembrane segment at 20 to 43 (PVTIPAVMFIFGVVGNLVAIVVLC) threads the bilayer. Over 44–55 (KSRKEQKETTFY) the chain is Cytoplasmic. A helical transmembrane segment spans residues 56-79 (TLVCGLAVTDLLGTLLVSPVTIAT). The Extracellular portion of the chain corresponds to 80–96 (YMKGQWPGGQALCDYST). A disulfide bridge links C92 with C170. A helical membrane pass occupies residues 97-115 (FILLFFGLSGLSIICAMSI). Residues 116–135 (ERYLAINHAYFYSHYVDKRL) lie on the Cytoplasmic side of the membrane. A helical membrane pass occupies residues 136–160 (AGLTLFAVYASNVLFCALPNMGLGR). At 161 to 184 (SRLQFPDTWCFIDWRTNVTAHAAF) the chain is on the extracellular side. An N-linked (GlcNAc...) asparagine glycan is attached at N177. The helical transmembrane segment at 185–211 (SYMYAGFSSFLILATVLCNVLVCGALL) threads the bilayer. Topologically, residues 212-270 (RMHRQFMRRTSLGTEQHHAAAAAAVTSAACRGHPTASPALPRLSDFRRRRSFRRIAGAE) are cytoplasmic. Residues 271 to 298 (IQMVILLIATSLVVLICSIPLVVRVFIN) form a helical membrane-spanning segment. Over 299–315 (QLYQPDLVREISQNPDL) the chain is Extracellular. Residues 316-335 (QAIRIASVNPILDPWIYILL) form a helical membrane-spanning segment. At 336 to 488 (RKTVLSKAIE…ETLNLSEKCI (153 aa)) the chain is on the cytoplasmic side. The segment covering 358 to 371 (RRDRSGQHCSDSRR) has biased composition (basic and acidic residues). The interval 358 to 381 (RRDRSGQHCSDSRRTSSAMSTHSR) is disordered. Polar residues predominate over residues 372–381 (TSSAMSTHSR). S377, S380, S382, and S385 each carry phosphoserine. Residues 456 to 475 (EVGGGGRAGPTPKGSSLQVT) form a disordered region.

It belongs to the G-protein coupled receptor 1 family. In terms of assembly, interacts with FEM1A. Phosphorylation mediates agonist-mediated desensitization by promoting cytoplasmic retention. As to expression, highly expressed in intestine, duodenal epithelium, uterus, thymus and adrenal cortex. Lower but significant expression in whole adrenal, lung, spleen, stomach, and kidney. In this latter organ, the receptor is localized in the glomeruli and the transitional epithelium of the renal calyx.

It is found in the cell membrane. Its function is as follows. Receptor for prostaglandin E2 (PGE2). The activity of this receptor is mediated by G(s) proteins that stimulate adenylate cyclase. Has a relaxing effect on smooth muscle. May play an important role in regulating renal hemodynamics, intestinal epithelial transport, adrenal aldosterone secretion, and uterine function. In Oryctolagus cuniculus (Rabbit), this protein is Prostaglandin E2 receptor EP4 subtype (PTGER4).